Reading from the N-terminus, the 262-residue chain is Outer membrane protein assembly factor BamD (262 aa).

Residues 1–18 form the signal peptide; sequence MRKIKSLALLAVAALVIG. C19 carries the N-palmitoyl cysteine lipid modification. Residue C19 is the site of S-diacylglycerol cysteine attachment.

It belongs to the BamD family. In terms of assembly, part of the Bam complex.

It localises to the cell outer membrane. Functionally, part of the outer membrane protein assembly complex, which is involved in assembly and insertion of beta-barrel proteins into the outer membrane. The sequence is that of Outer membrane protein assembly factor BamD from Haemophilus influenzae (strain ATCC 51907 / DSM 11121 / KW20 / Rd).